Here is a 466-residue protein sequence, read N- to C-terminus: Arginine biosynthesis bifunctional protein ArgJ, mitochondrial (466 aa).

Residues 1-9 constitute a mitochondrion transit peptide; it reads MSSLVLKRF. Thr-183, Lys-209, Thr-232, Glu-320, Asn-461, and Ser-466 together coordinate substrate. Residue Thr-232 is the Nucleophile of the active site.

Belongs to the ArgJ family. Heterodimer of an alpha and a beta chain. The alpha and beta chains are autoproteolytically processed from a single precursor protein within the mitochondrion.

It localises to the mitochondrion matrix. It carries out the reaction N(2)-acetyl-L-ornithine + L-glutamate = N-acetyl-L-glutamate + L-ornithine. The catalysed reaction is L-glutamate + acetyl-CoA = N-acetyl-L-glutamate + CoA + H(+). The protein operates within amino-acid biosynthesis; L-arginine biosynthesis; L-ornithine and N-acetyl-L-glutamate from L-glutamate and N(2)-acetyl-L-ornithine (cyclic): step 1/1. It participates in amino-acid biosynthesis; L-arginine biosynthesis; N(2)-acetyl-L-ornithine from L-glutamate: step 1/4. Catalyzes two activities which are involved in the cyclic version of arginine biosynthesis: the synthesis of acetylglutamate from glutamate and acetyl-CoA, and of ornithine by transacetylation between acetylornithine and glutamate. The sequence is that of Arginine biosynthesis bifunctional protein ArgJ, mitochondrial from Laccaria bicolor (strain S238N-H82 / ATCC MYA-4686) (Bicoloured deceiver).